Consider the following 97-residue polypeptide: Aspartyl/glutamyl-tRNA(Asn/Gln) amidotransferase subunit C (97 aa).

The protein belongs to the GatC family. In terms of assembly, heterotrimer of A, B and C subunits.

It carries out the reaction L-glutamyl-tRNA(Gln) + L-glutamine + ATP + H2O = L-glutaminyl-tRNA(Gln) + L-glutamate + ADP + phosphate + H(+). The enzyme catalyses L-aspartyl-tRNA(Asn) + L-glutamine + ATP + H2O = L-asparaginyl-tRNA(Asn) + L-glutamate + ADP + phosphate + 2 H(+). Its function is as follows. Allows the formation of correctly charged Asn-tRNA(Asn) or Gln-tRNA(Gln) through the transamidation of misacylated Asp-tRNA(Asn) or Glu-tRNA(Gln) in organisms which lack either or both of asparaginyl-tRNA or glutaminyl-tRNA synthetases. The reaction takes place in the presence of glutamine and ATP through an activated phospho-Asp-tRNA(Asn) or phospho-Glu-tRNA(Gln). This is Aspartyl/glutamyl-tRNA(Asn/Gln) amidotransferase subunit C from Synechococcus sp. (strain JA-2-3B'a(2-13)) (Cyanobacteria bacterium Yellowstone B-Prime).